The primary structure comprises 211 residues: LexA repressor (211 aa).

A DNA-binding region (H-T-H motif) is located at residues 28-48 (VREVGEAVGLSSSSTIHGHIE). Residues Ser132 and Lys170 each act as for autocatalytic cleavage activity in the active site.

This sequence belongs to the peptidase S24 family. Homodimer.

The catalysed reaction is Hydrolysis of Ala-|-Gly bond in repressor LexA.. In terms of biological role, represses a number of genes involved in the response to DNA damage (SOS response), including recA and lexA. In the presence of single-stranded DNA, RecA interacts with LexA causing an autocatalytic cleavage which disrupts the DNA-binding part of LexA, leading to derepression of the SOS regulon and eventually DNA repair. This chain is LexA repressor, found in Leuconostoc citreum (strain KM20).